We begin with the raw amino-acid sequence, 526 residues long: Protein mono-ADP-ribosyltransferase PARP3 (526 aa).

The segment at 1-55 is disordered; sequence MAPKRRAPPASQPADGGKKAKGGQEEEEDAWSSALNALKTAPREKPPATIDGQCP. A WGR domain is found at 61–151; the sequence is DAKVYEDYDC…DNFVAQPGKY (91 aa). The PARP alpha-helical domain maps to 183–301; that stretch reads PCALDETTQK…DIEVAQSLQA (119 aa). A PARP catalytic domain is found at 312-526; it reads HPLDRDYALL…RIRYLVQLHF (215 aa).

This sequence belongs to the ARTD/PARP family.

The protein localises to the nucleus. It is found in the chromosome. Its subcellular location is the cytoplasm. The protein resides in the cytoskeleton. It localises to the microtubule organizing center. The protein localises to the centrosome. It is found in the centriole. It carries out the reaction L-aspartyl-[protein] + NAD(+) = 4-O-(ADP-D-ribosyl)-L-aspartyl-[protein] + nicotinamide. It catalyses the reaction L-glutamyl-[protein] + NAD(+) = 5-O-(ADP-D-ribosyl)-L-glutamyl-[protein] + nicotinamide. The enzyme catalyses L-lysyl-[protein] + NAD(+) = N(6)-(ADP-D-ribosyl)-L-lysyl-[protein] + nicotinamide + H(+). In terms of biological role, mono-ADP-ribosyltransferase that mediates mono-ADP-ribosylation of target proteins and plays a key role in the response to DNA damage. Mediates mono-ADP-ribosylation of glutamate, aspartate or lysine residues on target proteins. In contrast to PARP1 and PARP2, it is not able to mediate poly-ADP-ribosylation. Involved in DNA repair by mediating mono-ADP-ribosylation of a limited number of acceptor proteins involved in chromatin architecture and in DNA metabolism, such as histone H2B, XRCC5 and XRCC6. ADP-ribosylation follows DNA damage and appears as an obligatory step in a detection/signaling pathway leading to the reparation of DNA strand breaks. Involved in single-strand break repair by catalyzing mono-ADP-ribosylation of histone H2B on 'Glu-2' (H2BE2ADPr) of nucleosomes containing nicked DNA. Cooperates with the XRCC5-XRCC6 (Ku80-Ku70) heterodimer to limit end-resection thereby promoting accurate NHEJ. Associates with a number of DNA repair factors and is involved in the response to exogenous and endogenous DNA strand breaks. Together with APLF, promotes the retention of the LIG4-XRCC4 complex on chromatin and accelerate DNA ligation during non-homologous end-joining (NHEJ). In addition to proteins, also able to ADP-ribosylate DNA: mediates DNA mono-ADP-ribosylation of DNA strand break termini via covalent addition of a single ADP-ribose moiety to a 5'- or 3'-terminal phosphate residues in DNA containing multiple strand breaks. This is Protein mono-ADP-ribosyltransferase PARP3 from Gallus gallus (Chicken).